The primary structure comprises 426 residues: MENIFKEKEKGKEKAKEEEKENDSGDLFDSEDEGTEDYKKGGYHPVKVGEVYKSNYRIVKKLGWGHFSTVWLAIDEKNGGREVALKIVKSASHYREAAEDEIHLLQTISEGDPESKYCVVKLLDSFLHTGPHGKHICMVFEKLGSNLLDLIKLHNYKGIPLPLVKCMTKQILIGLDYLHTKCKIIHTDLKPENVLLDHLLRPDTLNWDDQFLDGASSSSPISNDAENARQTRSGKIKWEPSARIADSLSRKIVKVPIVKIADLGTACWTHKHFTDDVQTRQYRCPEVILGQKWDTTIDMWSLACMVFELATGDLLFCPKKGDKYDKTDDHLALMIELLGRMPRSFITKGSKSEKYFNSKGELKYIRKLGPQWGMSDVLYEKYRFPKEEADKLSAFLLPMLQYEPEKRATARDSLEHPYMADVPPFL.

A compositionally biased stretch (basic and acidic residues) spans 1–23 (MENIFKEKEKGKEKAKEEEKEND). The segment at 1–40 (MENIFKEKEKGKEKAKEEEKENDSGDLFDSEDEGTEDYKK) is disordered. Residues 24-35 (SGDLFDSEDEGT) are compositionally biased toward acidic residues. Residues 56 to 419 (YRIVKKLGWG…ARDSLEHPYM (364 aa)) form the Protein kinase domain. ATP contacts are provided by residues 62–70 (LGWGHFSTV) and lysine 86. Aspartate 188 acts as the Proton acceptor in catalysis. Residues 318–328 (PKKGDKYDKTD) carry the Nuclear localization signal motif.

The protein belongs to the protein kinase superfamily. CMGC Ser/Thr protein kinase family.

Its subcellular location is the nucleus. It carries out the reaction L-seryl-[protein] + ATP = O-phospho-L-seryl-[protein] + ADP + H(+). The catalysed reaction is L-threonyl-[protein] + ATP = O-phospho-L-threonyl-[protein] + ADP + H(+). Functionally, phosphorylates serine/arginine-rich protein PSR. The chain is Serine/threonine-protein kinase SRPK from Physarum polycephalum (Slime mold).